The primary structure comprises 273 residues: MKLIENWFSERYSDNLQLSFRVSDQLLSIKTDYQRIDLFDTYDFGKLLAIDGTVQLTERDEFIYHELITMVPYHLTPRPPENALIIGGGDGGAARRLIDLGLKHIVNVEIDDQVVEVSKRFFPSLSSAFNDSHVKLLIQDGIKYVKNTSEKFDLIIIDSTDPEGPAEGLFSKDFYNDTRKIMNEGAVIVSQSGSPFYQPKAIKLAYSGMREVFSDVRVYTGFIPTYPSGFWSFTVASPWTMKPRPVNMSGKYFNADVMEGSFRLPQFVKELIT.

Positions 5–238 (ENWFSERYSD…GFWSFTVASP (234 aa)) constitute a PABS domain. Q34 is an S-methyl-5'-thioadenosine binding site. The spermidine site is built by H65 and D90. S-methyl-5'-thioadenosine-binding positions include E109 and 140 to 141 (DG). D158 functions as the Proton acceptor in the catalytic mechanism. Residue 158 to 161 (DSTD) coordinates spermidine. Residue P165 participates in S-methyl-5'-thioadenosine binding.

The protein belongs to the spermidine/spermine synthase family. As to quaternary structure, homodimer or homotetramer.

It localises to the cytoplasm. The enzyme catalyses S-adenosyl 3-(methylsulfanyl)propylamine + putrescine = S-methyl-5'-thioadenosine + spermidine + H(+). It participates in amine and polyamine biosynthesis; spermidine biosynthesis; spermidine from putrescine: step 1/1. Catalyzes the irreversible transfer of a propylamine group from the amino donor S-adenosylmethioninamine (decarboxy-AdoMet) to putrescine (1,4-diaminobutane) to yield spermidine. In Thermoplasma acidophilum (strain ATCC 25905 / DSM 1728 / JCM 9062 / NBRC 15155 / AMRC-C165), this protein is Polyamine aminopropyltransferase.